Consider the following 942-residue polypeptide: Homeobox transcription factor phx1 (942 aa).

Polar residues-rich tracts occupy residues 1–19 (MRSYSNPENGGQINDNINY), 61–73 (HLQGEQQNPTNPN), 99–116 (ADNNSFDNVNSSKLTNPS), and 122–135 (IVKSESEPANSKQN). 5 disordered regions span residues 1–54 (MRSY…MQLP), 61–80 (HLQGEQQNPTNPNYFPPEFD), 87–172 (KQEK…KKQR), 604–651 (WANQ…STST), and 892–922 (SSSGGVYASQPGASGYLSHDQSGSPFEDVYS). Residues 142–151 (SVEKAKENVA) show a composition bias toward basic and acidic residues. Residues 153-164 (ESGTPESGGSTS) are compositionally biased toward low complexity. Positions 164 to 224 (SAPKSKKQRL…QNRRAKSKLI (61 aa)) form a DNA-binding region, homeobox. Composition is skewed to polar residues over residues 604–614 (WANQLPRQPDS) and 630–641 (SHDTSSEYGNKS).

It is found in the nucleus. Functionally, trnascription factor that regulates the expression of the homocitrate synthase (HCS) lys4. This Schizosaccharomyces pombe (strain 972 / ATCC 24843) (Fission yeast) protein is Homeobox transcription factor phx1 (phx1).